The chain runs to 127 residues: Small ribosomal subunit protein uS13 (127 aa).

The interval 92-127 (HRMGLPVRGQRTRTNARTRRGVRRTVAGKKKASAKK) is disordered. Residues 101–127 (QRTRTNARTRRGVRRTVAGKKKASAKK) are compositionally biased toward basic residues.

Belongs to the universal ribosomal protein uS13 family. As to quaternary structure, part of the 30S ribosomal subunit. Forms a loose heterodimer with protein S19. Forms two bridges to the 50S subunit in the 70S ribosome.

Located at the top of the head of the 30S subunit, it contacts several helices of the 16S rRNA. In the 70S ribosome it contacts the 23S rRNA (bridge B1a) and protein L5 of the 50S subunit (bridge B1b), connecting the 2 subunits; these bridges are implicated in subunit movement. Contacts the tRNAs in the A and P-sites. This is Small ribosomal subunit protein uS13 from Trichodesmium erythraeum (strain IMS101).